The primary structure comprises 287 residues: uncharacterized protein (287 aa).

The protein belongs to the A.longa ORF167/ORF288 family.

Its subcellular location is the plastid. This is an uncharacterized protein from Euglena longa (Euglenophycean alga).